The primary structure comprises 968 residues: MPFTLGQRWISDTESELGLGTVVALDTRMITLLFPATGENRLYARNDSPITRVMFNPGDTISNHEGWELQVEEVKEENGLLTYIGTRLDTQESGVAMREVLLDSKLTFSKPQDRLFAGQIDRMDRFALRFRARKYQSEQYRLPFAGLRGMRASLIPHQLHIAYEVGQRHAPRVLLADEVGLGKTIEAGMIIHQQLLAGRAERVLIVVPETLQHQWLVEMMRRFNLYFSLFDDSRYSEAKLDSSNPFETEQLVICSLDFVRRNKLRLEELADAQWDLLVVDEAHHLAWSEEAPSREYQVIEQLAEHIPGVLLLTATPEQLGQQSHFARLRLLDPNRFHDYQDFVAEQQKYRPVADAVTLLLSGERLADDKLNLLGELIDEQDIEPLLKAANSDSDNSEQARQELVTMLMDRHGTSRVLFRNTRNGVKGFPHRFLHQIKLPLPTQYQTAIKVSGIMGAKKTVEARARDMLYPEQIYQEFEGENATWWNFDPRVEWLLNYLVANRHEKVLVICAHAATALQLEQVLREREAIRAAVFHEGLSIIERDRAAAYFASEEDGAQVLLCSEIGSEGRNFQFASHLVMFDLPFNPDLLEQRIGRLDRIGQMHDIQIMVPYLENTAQAVLGRWFHEGLDAFEHTCPTGRTIYDSGYEQLIGFLAAPTEQEGLDEFIHHCRQQHDHLKVQLEQGRDRLLEMHSNGGEKAQALAEAIANQDNDVNLVGFALNLFDIVGINQDDRSDNLIVLTPSDHMLVPDFPGLPQDGCTVTFDREQALSREDAQFVSWEHPIIRNGLDLILSGDTGSCAVSLLKNKALPVGTLLVELVYVVEAQAPKHLQLTRFLPPTPIRMLMDRKGTNLAAQVEFESFNRQLNAVNRHTSSKLVNAVQQDVHAMLQQAESLVEEQARALIEQAKQEADDKLSTELARLEALKAVNPNIRDDEVEALEFNRKQVLVNLNEAGWRLDAIRLVVVTHQ.

A Helicase ATP-binding domain is found at 164 to 334 (EVGQRHAPRV…FARLRLLDPN (171 aa)). 177–184 (DEVGLGKT) serves as a coordination point for ATP. The short motif at 280–283 (DEAH) is the DEAH box element. The 175-residue stretch at 490 to 664 (RVEWLLNYLV…AAPTEQEGLD (175 aa)) folds into the Helicase C-terminal domain.

Belongs to the SNF2/RAD54 helicase family. RapA subfamily. As to quaternary structure, interacts with the RNAP. Has a higher affinity for the core RNAP than for the holoenzyme. Its ATPase activity is stimulated by binding to RNAP.

Functionally, transcription regulator that activates transcription by stimulating RNA polymerase (RNAP) recycling in case of stress conditions such as supercoiled DNA or high salt concentrations. Probably acts by releasing the RNAP, when it is trapped or immobilized on tightly supercoiled DNA. Does not activate transcription on linear DNA. Probably not involved in DNA repair. The sequence is that of RNA polymerase-associated protein RapA from Serratia proteamaculans (strain 568).